The chain runs to 98 residues: MVKMSHGPRSGSRRKLTKSAEERKRSVIGRFMQEFEPGDRVAIDIEPSVHAGMPYHRFQGYTGVVEGPQGDCYKVAVKIDSLTKYVIASPVHLKKIKG.

Residues 1-24 form a disordered region; that stretch reads MVKMSHGPRSGSRRKLTKSAEERK.

It belongs to the eukaryotic ribosomal protein eL21 family.

This is Large ribosomal subunit protein eL21 (rpl21e) from Thermoplasma acidophilum (strain ATCC 25905 / DSM 1728 / JCM 9062 / NBRC 15155 / AMRC-C165).